A 1140-amino-acid polypeptide reads, in one-letter code: Squamosa promoter-binding-like protein 15 (1140 aa).

Disordered stretches follow at residues Arg-73–Gln-112 and Asp-124–Ser-177. Composition is skewed to low complexity over residues Ala-76–Arg-100 and Val-125–Ser-135. The segment covering Ala-164–Ser-177 has biased composition (gly residues). The SBP-type zinc-finger motif lies at Tyr-184 to Thr-261. Zn(2+) is bound by residues Cys-187, Cys-192, Cys-209, His-212, Cys-228, Cys-231, His-235, and Cys-247. The Bipartite nuclear localization signal motif lies at Lys-244–Lys-260. Disordered regions lie at residues Asn-327 to Phe-382, Thr-403 to Tyr-472, Leu-496 to His-517, and Lys-558 to Asp-597. Over residues Ala-345–Phe-375 the composition is skewed to polar residues. Residues Thr-403 to Thr-430 are compositionally biased toward low complexity. The segment covering Arg-450 to Asp-466 has biased composition (basic and acidic residues). Residues Leu-496 to Pro-514 show a composition bias toward polar residues. Low complexity predominate over residues Thr-579–Ser-593.

In terms of tissue distribution, expressed in stems, leaf sheaths, and young panicles.

The protein localises to the nucleus. Its function is as follows. Trans-acting factor that binds specifically to the consensus nucleotide sequence 5'-TNCGTACAA-3'. The sequence is that of Squamosa promoter-binding-like protein 15 (SPL15) from Oryza sativa subsp. indica (Rice).